A 468-amino-acid polypeptide reads, in one-letter code: Mothers against decapentaplegic homolog 1 (468 aa).

Met1 is subject to N-acetylmethionine. The 125-residue stretch at 12–136 (PAVKRLLGWK…YKRVESPVLP (125 aa)) folds into the MH1 domain. Zn(2+) is bound by residues Cys64, Cys109, Cys121, and His126. The disordered stretch occupies residues 162 to 246 (NEPHMPLNAT…DGSQPMDTNM (85 aa)). A compositionally biased stretch (low complexity) spans 188–210 (PNSSYPNSPGSSSSTYPHSPTSS). Over residues 221-232 (DTPPPAYLPPED) the composition is skewed to pro residues. Residues 237-246 (DGSQPMDTNM) show a composition bias toward polar residues. The MH2 domain occupies 274–468 (WCSIVYYELN…SPHNPISSVS (195 aa)). Thr325 is subject to Phosphothreonine; by MINK1, TNIK and MAP4K4. Residues 421–431 (KGWGAEYHRQD) are L3 loop. 2 positions are modified to phosphoserine: Ser466 and Ser468.

Belongs to the dwarfin/SMAD family. As to quaternary structure, found in a complex with SMAD4 and YY1. Interacts with HGS, NANOG and ZCCHC12. Upon C-terminus phosphorylation: forms trimers with another SMAD1 and the co-SMAD SMAD4. Interacts with PEBP2-alpha subunit, CREB-binding protein (CBP), p300, SMURF1, SMURF2, USP15 and HOXC8. Associates with ZNF423 or ZNF521 in response to BMP2 leading to activate transcription of BMP target genes. Interacts with SKOR1. Interacts (via MH2 domain) with LEMD3. Binding to LEMD3 results in at least a partial reduction of receptor-mediated phosphorylation. Forms a ternary complex with PSMB4 and OAZ1 before PSMB4 is incorporated into the 20S proteasome. Interacts (via MH2 domain) with FAM83G (via MH2 domain); in a SMAD4-independent manner. Interacts with ZC3H3. Interacts with TMEM119. Interacts (via MH1 and MH2 domains) with ZNF8. Interacts with RANBP3L; the interaction increases when SMAD1 is not phosphorylated and mediates SMAD1 nuclear export. Interacts with EGR1; this interaction inhibits SMAD1 dephosphorylation. Interacts with SMAD6. Interacts with YAP1. Interacts with MTMR4; negatively regulates BMP signaling through SMAD1 dephosphorylation and retention in endosomes. Post-translationally, phosphorylation of the C-terminal SVS motif by BMP type 1 receptor kinase activates SMAD1 by promoting dissociation from the receptor and trimerization with SMAD4. Phosphorylation by ERK2 MAP kinase in response to EGF or HGF prevents SMAD1 nuclear accumulation and transcriptional activity in response to BMP. Dephosphorylation, probably by PPM1A, induces its export from the nucleus to the cytoplasm. Dephosphorylation is inhibited by association with EGR1. Phosphorylation by CDK8/9 creates binding sites for YAP1, and subsequent phosphorylation by GSK3 switches off YAP1 binding and adds binding sites for SMURF1. In terms of processing, ubiquitinated by SMAD-specific E3 ubiquitin ligase SMURF1, leading to its degradation. Monoubiquitinated, leading to prevent DNA-binding. Deubiquitination by USP15 alleviates inhibition and promotes activation of TGF-beta target genes. Dephosphorylation, probably by PPM1A, induces its export from the nucleus to the cytoplasm. Phospho-SMAD1 is ubiquitinated by CHIP leading to disruption of the SMAD1-SMAD4 complex. Ubiquitous; present in liver, lung, stomach and spleen with lower level in heart, testes and skeletal muscle.

Its subcellular location is the cytoplasm. The protein localises to the nucleus. Transcriptional modulator that plays a role in various cellular processes, including embryonic development, cell differentiation, and tissue homeostasis. Upon BMP ligand binding to their receptors at the cell surface, is phosphorylated by activated type I BMP receptors (BMPRIs) and associates with SMAD4 to form an heteromeric complex which translocates into the nucleus acting as transcription factor. In turn, the hetero-trimeric complex recognizes cis-regulatory elements containing Smad Binding Elements (SBEs) to modulate the outcome of the signaling network. SMAD1/OAZ1/PSMB4 complex mediates the degradation of the CREBBP/EP300 repressor SNIP1. Positively regulates BMP4-induced expression of odontogenic development regulator MSX1 following IPO7-mediated nuclear import. This Rattus norvegicus (Rat) protein is Mothers against decapentaplegic homolog 1 (Smad1).